A 337-amino-acid chain; its full sequence is BRI1 kinase inhibitor 1 (337 aa).

Residues 1-25 (METNLQQVKNSSQTFSEKQNPKQEA) are compositionally biased toward polar residues. Disordered regions lie at residues 1–38 (METN…SSPS) and 51–72 (SSSS…SSYQ). Residues 26 to 38 (SPSPISSTCSSPS) are compositionally biased toward low complexity. Y211 carries the post-translational modification Phosphotyrosine. Residues 270–310 (SAPASMRTSPTNSGHLRVSTAGLSSSSGSTSSSSSDSTMEE) are disordered. Residues 288-310 (STAGLSSSSGSTSSSSSDSTMEE) are compositionally biased toward low complexity.

In terms of assembly, interacts (via C-terminus) with BRI1 (via kinase domain). Phosphorylated on Tyr-211 in response to brassinosteroid perception, leading to its inactivation: once phosphorylated, displaced into the cytosol where it is inactive. In terms of tissue distribution, expressed in leaves, petioles, shoot apices, hypocotyls, roots and flowers.

Its subcellular location is the cell membrane. The protein resides in the cytoplasm. In terms of biological role, negative regulator of brassinosteroid signaling. When associated to the membrane, limits the interaction of BRI1 with BAK1 by binding to the kinase-inactive form of BRI1. The sequence is that of BRI1 kinase inhibitor 1 (BKI1) from Arabidopsis thaliana (Mouse-ear cress).